Here is a 398-residue protein sequence, read N- to C-terminus: Chorismate synthase (398 aa).

Residues Arg-44 and Arg-50 each contribute to the NADP(+) site. FMN is bound by residues 133-135 (RAS), 261-262 (QA), Gly-306, 321-325 (KPIPT), and Arg-347.

Belongs to the chorismate synthase family. In terms of assembly, homotetramer. Requires FMNH2 as cofactor.

It catalyses the reaction 5-O-(1-carboxyvinyl)-3-phosphoshikimate = chorismate + phosphate. Its pathway is metabolic intermediate biosynthesis; chorismate biosynthesis; chorismate from D-erythrose 4-phosphate and phosphoenolpyruvate: step 7/7. Catalyzes the anti-1,4-elimination of the C-3 phosphate and the C-6 proR hydrogen from 5-enolpyruvylshikimate-3-phosphate (EPSP) to yield chorismate, which is the branch point compound that serves as the starting substrate for the three terminal pathways of aromatic amino acid biosynthesis. This reaction introduces a second double bond into the aromatic ring system. This Aquifex aeolicus (strain VF5) protein is Chorismate synthase.